The primary structure comprises 472 residues: 2-oxoisovalerate dehydrogenase subunit alpha 2, mitochondrial (472 aa).

Residue 185 to 187 coordinates thiamine diphosphate; the sequence is QYR. Positions 234, 239, and 240 each coordinate K(+).

The protein belongs to the BCKDHA family. As to quaternary structure, heterotetramer of alpha and beta chains. The cofactor is thiamine diphosphate.

Its subcellular location is the mitochondrion matrix. It carries out the reaction N(6)-[(R)-lipoyl]-L-lysyl-[protein] + 3-methyl-2-oxobutanoate + H(+) = N(6)-[(R)-S(8)-2-methylpropanoyldihydrolipoyl]-L-lysyl-[protein] + CO2. In terms of biological role, the branched-chain alpha-keto dehydrogenase complex catalyzes the overall conversion of alpha-keto acids to acyl-CoA and CO(2). It contains multiple copies of three enzymatic components: branched-chain alpha-keto acid decarboxylase (E1), lipoamide acyltransferase (E2) and lipoamide dehydrogenase (E3). The polypeptide is 2-oxoisovalerate dehydrogenase subunit alpha 2, mitochondrial (Arabidopsis thaliana (Mouse-ear cress)).